The following is a 481-amino-acid chain: Proline--tRNA ligase (481 aa).

It belongs to the class-II aminoacyl-tRNA synthetase family. ProS type 3 subfamily. In terms of assembly, homodimer.

Its subcellular location is the cytoplasm. It catalyses the reaction tRNA(Pro) + L-proline + ATP = L-prolyl-tRNA(Pro) + AMP + diphosphate. Its function is as follows. Catalyzes the attachment of proline to tRNA(Pro) in a two-step reaction: proline is first activated by ATP to form Pro-AMP and then transferred to the acceptor end of tRNA(Pro). This chain is Proline--tRNA ligase, found in Pelodictyon phaeoclathratiforme (strain DSM 5477 / BU-1).